Here is a 485-residue protein sequence, read N- to C-terminus: Aspartyl/glutamyl-tRNA(Asn/Gln) amidotransferase subunit B (485 aa).

It belongs to the GatB/GatE family. GatB subfamily. As to quaternary structure, heterotrimer of A, B and C subunits.

The enzyme catalyses L-glutamyl-tRNA(Gln) + L-glutamine + ATP + H2O = L-glutaminyl-tRNA(Gln) + L-glutamate + ADP + phosphate + H(+). The catalysed reaction is L-aspartyl-tRNA(Asn) + L-glutamine + ATP + H2O = L-asparaginyl-tRNA(Asn) + L-glutamate + ADP + phosphate + 2 H(+). Allows the formation of correctly charged Asn-tRNA(Asn) or Gln-tRNA(Gln) through the transamidation of misacylated Asp-tRNA(Asn) or Glu-tRNA(Gln) in organisms which lack either or both of asparaginyl-tRNA or glutaminyl-tRNA synthetases. The reaction takes place in the presence of glutamine and ATP through an activated phospho-Asp-tRNA(Asn) or phospho-Glu-tRNA(Gln). This is Aspartyl/glutamyl-tRNA(Asn/Gln) amidotransferase subunit B from Borrelia duttonii (strain Ly).